An 856-amino-acid polypeptide reads, in one-letter code: MTADYSFLKSFAEYIIDKLEKGTEVQIILPNNFSCLELKKILTDKYKIKLPIIIPFNSLISKKTDSDYVSKIEELLIISKIITEYKDLQFNKNESLKAAEILRKLINDLIINNIDIKLIEVYNNSNYWQKIYKFLEYCFLRWQEEISLTQKQTKAIHKLKLLQEEIIRIKNKQIILVGMFKPNVFLKRFEEDLKDYIVYYNQTSKQISDGISYYEPNDIYEEAVAIAYICSRNKDKRIAIITNNNKLKRVYCNFLDRYEDLLGNDLRLTNIGELLTSIIKILCNNFDLKLLFLLLKNPLINCSATQKLEVMLSNKNRFISSPKYLLQLQFDNEDTKEYCRNLIDILFTDNPHNILDILTLTKEIAEKLLPTIWEKEGGAELVEFLTNLTAYSKYINSMDKKDFPKIFSFLLSNIKYYKNTDSANIIIAPPEDLALCTFDLIILPHFNNENWTPTAKSHPWLSKKALQILNIDYNETASTLYSDYFNLFLQNKQVIILNAKKYDGKLSVPSNLFLKLQDVIPAVHYVIPAEAGIHLDMDSRRCWNDIRKDDIGDESTAHSHSFPSVLSVTDIETLIRNPYGFYAKKILGLRKKDNIWEEPKISDFGNFIHKVLEEYSKNYDKQFINLNLLDKQNALINIGNHILYGTILPNYTKKTWQIKLTAFSKAFILFDIERRKNCKEIYFETKGELRLNIAGQDIKIIGIADRIEISKSNHITILDYKTGTIPTKKEIELGLSPQLIIESLMLLENGFNIKNENTIVNSVGLGYKARGATPIIIGETTSNDVGKPKSIDYTIAYVKITSTEPYVQTTEIALSIETLNKHKAGLIKLLEYYVTNKSFSYDLNLSKYNDYLHLSR.

This is an uncharacterized protein from Rickettsia felis (strain ATCC VR-1525 / URRWXCal2) (Rickettsia azadi).